We begin with the raw amino-acid sequence, 49 residues long: MAVKDYYKVQGDSVTRIKQFCPRCGPGTFLADHKNRLTCGKCGYTEFKK.

Zn(2+) is bound by residues Cys21, Cys24, Cys39, and Cys42. The C4-type zinc finger occupies Cys21–Cys42.

Belongs to the eukaryotic ribosomal protein eS31 family. Part of the 30S ribosomal subunit. Zn(2+) is required as a cofactor.

The polypeptide is Small ribosomal subunit protein eS31 (Methanosarcina barkeri (strain Fusaro / DSM 804)).